The sequence spans 549 residues: Myotubularin-related protein 9 (549 aa).

At Met-1 the chain carries N-acetylmethionine. Residues 4–99 (AELIKTPRVD…LNIASSIEAL (96 aa)) form the GRAM domain. The Myotubularin phosphatase domain occupies 123-498 (GWHSFLPEQE…QSLQLWEGIF (376 aa)). Positions 508-542 (LDEAYEEMVNIIEYNKELQAKVNLLRRQLAELETE) form a coiled coil. Phosphoserine is present on Ser-548.

Belongs to the protein-tyrosine phosphatase family. Non-receptor class myotubularin subfamily. In terms of assembly, homodimer. Heterodimer (via C-terminus) with lipid phosphatase MTMR6 (via C-terminus). Heterodimer (via coiled coil domain) with lipid phosphatase MTMR7 (via C-terminus). Heterodimer with lipid phosphatase MTMR8.

Its subcellular location is the cytoplasm. The protein resides in the cell projection. It localises to the ruffle membrane. It is found in the perinuclear region. The protein localises to the endoplasmic reticulum. Functionally, acts as an adapter for myotubularin-related phosphatases. Increases lipid phosphatase MTMR6 catalytic activity, specifically towards phosphatidylinositol 3,5-bisphosphate, and MTMR6 binding affinity for phosphorylated phosphatidylinositols. Positively regulates lipid phosphatase MTMR7 catalytic activity. Increases MTMR8 catalytic activity towards phosphatidylinositol 3-phosphate. The formation of the MTMR6-MTMR9 complex, stabilizes both MTMR6 and MTMR9 protein levels. Stabilizes MTMR8 protein levels. Plays a role in the late stages of macropinocytosis possibly by regulating MTMR6-mediated dephosphorylation of phosphatidylinositol 3-phosphate in membrane ruffles. Negatively regulates autophagy, in part via its association with MTMR8. Negatively regulates DNA damage-induced apoptosis, in part via its association with MTMR6. Does not bind mono-, di- and tri-phosphorylated phosphatidylinositols, phosphatidic acid and phosphatidylserine. This is Myotubularin-related protein 9 (MTMR9) from Bos taurus (Bovine).